The following is a 492-amino-acid chain: Katanin p60 ATPase-containing subunit A1 (492 aa).

Residues 80–186 (STPPKASQQE…ESEPKKFDST (107 aa)) form a disordered region. Residues 145–171 (PNDKGKAVRGREKKDQQNKGKEEKSKS) are compositionally biased toward basic and acidic residues. 250–257 (GPPGTGKT) lines the ATP pocket.

The protein belongs to the AAA ATPase family. Katanin p60 subunit A1 subfamily. In terms of assembly, can homooligomerize into hexameric rings, which may be promoted by interaction with microtubules. Interacts with KATNB1, which may serve as a targeting subunit.

It is found in the cytoplasm. It localises to the cytoskeleton. Its subcellular location is the microtubule organizing center. The protein resides in the centrosome. The protein localises to the spindle pole. It is found in the spindle. It catalyses the reaction n ATP + n H2O + a microtubule = n ADP + n phosphate + (n+1) alpha/beta tubulin heterodimers.. With respect to regulation, ATPase activity is stimulated by microtubules, which promote homooligomerization. ATP-dependent microtubule severing is stimulated by interaction with KATNB1. In terms of biological role, catalytic subunit of a complex which severs microtubules in an ATP-dependent manner. Microtubule severing may promote rapid reorganization of cellular microtubule arrays and the release of microtubules from the centrosome following nucleation. The polypeptide is Katanin p60 ATPase-containing subunit A1 (Gallus gallus (Chicken)).